Reading from the N-terminus, the 255-residue chain is Tryptophan synthase alpha chain (255 aa).

Catalysis depends on proton acceptor residues Glu51 and Asp62.

Belongs to the TrpA family. Tetramer of two alpha and two beta chains.

The catalysed reaction is (1S,2R)-1-C-(indol-3-yl)glycerol 3-phosphate + L-serine = D-glyceraldehyde 3-phosphate + L-tryptophan + H2O. It functions in the pathway amino-acid biosynthesis; L-tryptophan biosynthesis; L-tryptophan from chorismate: step 5/5. Its function is as follows. The alpha subunit is responsible for the aldol cleavage of indoleglycerol phosphate to indole and glyceraldehyde 3-phosphate. The chain is Tryptophan synthase alpha chain from Maridesulfovibrio salexigens (strain ATCC 14822 / DSM 2638 / NCIMB 8403 / VKM B-1763) (Desulfovibrio salexigens).